The following is a 196-amino-acid chain: ATP-dependent Clp protease proteolytic subunit (196 aa).

Ser99 serves as the catalytic Nucleophile. His124 is an active-site residue.

The protein belongs to the peptidase S14 family. Fourteen ClpP subunits assemble into 2 heptameric rings which stack back to back to give a disk-like structure with a central cavity, resembling the structure of eukaryotic proteasomes.

Its subcellular location is the cytoplasm. It carries out the reaction Hydrolysis of proteins to small peptides in the presence of ATP and magnesium. alpha-casein is the usual test substrate. In the absence of ATP, only oligopeptides shorter than five residues are hydrolyzed (such as succinyl-Leu-Tyr-|-NHMec, and Leu-Tyr-Leu-|-Tyr-Trp, in which cleavage of the -Tyr-|-Leu- and -Tyr-|-Trp bonds also occurs).. Cleaves peptides in various proteins in a process that requires ATP hydrolysis. Has a chymotrypsin-like activity. Plays a major role in the degradation of misfolded proteins. In Campylobacter lari (strain RM2100 / D67 / ATCC BAA-1060), this protein is ATP-dependent Clp protease proteolytic subunit.